Reading from the N-terminus, the 211-residue chain is 2,3-bisphosphoglycerate-dependent phosphoglycerate mutase (211 aa).

Residues 9–16, 22–23, arginine 61, 88–91, lysine 99, 115–116, and 159–160 contribute to the substrate site; these read RHGQSDWN, TG, ERDY, RR, and GN. Histidine 10 serves as the catalytic Tele-phosphohistidine intermediate. The Proton donor/acceptor role is filled by glutamate 88.

Belongs to the phosphoglycerate mutase family. BPG-dependent PGAM subfamily. In terms of assembly, homodimer.

The catalysed reaction is (2R)-2-phosphoglycerate = (2R)-3-phosphoglycerate. The protein operates within carbohydrate degradation; glycolysis; pyruvate from D-glyceraldehyde 3-phosphate: step 3/5. Catalyzes the interconversion of 2-phosphoglycerate and 3-phosphoglycerate. The protein is 2,3-bisphosphoglycerate-dependent phosphoglycerate mutase of Rhizobium etli (strain CIAT 652).